The primary structure comprises 450 residues: 3-phosphoshikimate 1-carboxyvinyltransferase (450 aa).

3-phosphoshikimate-binding residues include Lys-23, Ser-24, and Arg-28. Lys-23 serves as a coordination point for phosphoenolpyruvate. Positions 96 and 124 each coordinate phosphoenolpyruvate. Positions 167, 168, 169, 196, 311, and 340 each coordinate 3-phosphoshikimate. A phosphoenolpyruvate-binding site is contributed by Gln-169. The Proton acceptor role is filled by Glu-311. Phosphoenolpyruvate contacts are provided by Arg-344, Arg-385, and Lys-410. The interval 426 to 450 is disordered; sequence GQGWGYPQPRSGQRARRATGQGSGG.

It belongs to the EPSP synthase family. In terms of assembly, monomer.

The protein resides in the cytoplasm. It catalyses the reaction 3-phosphoshikimate + phosphoenolpyruvate = 5-O-(1-carboxyvinyl)-3-phosphoshikimate + phosphate. It participates in metabolic intermediate biosynthesis; chorismate biosynthesis; chorismate from D-erythrose 4-phosphate and phosphoenolpyruvate: step 6/7. Functionally, catalyzes the transfer of the enolpyruvyl moiety of phosphoenolpyruvate (PEP) to the 5-hydroxyl of shikimate-3-phosphate (S3P) to produce enolpyruvyl shikimate-3-phosphate and inorganic phosphate. The protein is 3-phosphoshikimate 1-carboxyvinyltransferase of Mycobacterium tuberculosis (strain ATCC 25177 / H37Ra).